The primary structure comprises 228 residues: Ribonuclease HII (228 aa).

The 210-residue stretch at 1 to 210 (MKIAGIDEAG…LKKIAEKVES (210 aa)) folds into the RNase H type-2 domain. A divalent metal cation-binding residues include Asp7, Glu8, and Asp105.

It belongs to the RNase HII family. In terms of assembly, monomer. It depends on Mn(2+) as a cofactor. Requires Mg(2+) as cofactor.

It localises to the cytoplasm. It carries out the reaction Endonucleolytic cleavage to 5'-phosphomonoester.. Functionally, endonuclease that specifically degrades the RNA of RNA-DNA hybrids. The chain is Ribonuclease HII (rnhB) from Thermococcus kodakarensis (strain ATCC BAA-918 / JCM 12380 / KOD1) (Pyrococcus kodakaraensis (strain KOD1)).